The primary structure comprises 707 residues: Choline transporter-like protein 4 (707 aa).

Residues 1 to 32 (MGEKQDPDKAYGKPAKYDPSFRGPIRNRSCTD) lie on the Cytoplasmic side of the membrane. Residues 33 to 53 (IICCVLFFVFILGYIAVGLVA) form a helical membrane-spanning segment. Over 54 to 226 (WVYGDPQQVL…KIFEDFAQSW (173 aa)) the chain is Extracellular. N-linked (GlcNAc...) asparagine glycans are attached at residues Asn-67, Asn-142, Asn-184, and Asn-195. A helical transmembrane segment spans residues 227–247 (YWILAALGVALVLSLLFVLLL). The Cytoplasmic segment spans residues 248 to 249 (RL). The helical transmembrane segment at 250–270 (VAGPLVFVLIIGVLGVLAYGI) threads the bilayer. Over 271-306 (YHCWNEYRLLRDKGASISQLGFTTNLSAYSSVQETW) the chain is Extracellular. The N-linked (GlcNAc...) asparagine glycan is linked to Asn-295. The chain crosses the membrane as a helical span at residues 307–327 (LAALILLAVLEGILLLMLIFL). The Cytoplasmic portion of the chain corresponds to 328–355 (RQRIRIAIALLEEASRAVGQMMSTLFYP). Residues 356–376 (LVTFVLLLVCIAYWAMTALYL) form a helical membrane-spanning segment. The Extracellular segment spans residues 377-452 (ATSGQPQYVL…GVLGLFWTIN (76 aa)). 3 N-linked (GlcNAc...) asparagine glycosylation sites follow: Asn-390, Asn-402, and Asn-413. The helical transmembrane segment at 453–473 (WVLALGQCVLAGAFASFYWAF) threads the bilayer. The Cytoplasmic segment spans residues 474–498 (HKPRDIPTFPLSSAFIRTLRYHTGS). A helical transmembrane segment spans residues 499 to 519 (LAFGALILTLVQIARAILEYI). Topologically, residues 520–557 (DHKLRGAQNPVARCIMCCFKCCLWCLEKFIKFLNRNAY) are extracellular. Residues 558–578 (IMIAIYGKNFCVSAKNAFMLL) form a helical membrane-spanning segment. At 579-594 (MRNIVRVVVLDKVTDL) the chain is on the cytoplasmic side. Residues 595–615 (LLFFGKLLVVGGVGVLSFFFF) form a helical membrane-spanning segment. Topologically, residues 616–635 (TGRIQGLGKDFESPQLNYYW) are extracellular. The helical transmembrane segment at 636-656 (LPIMTSIMGAYVIASGFFSVF) threads the bilayer. The Cytoplasmic segment spans residues 657–707 (GMCVDTLFLCFLEDLERNDGSLDRPYYMSKALLKILGKKNEVPSGDKKRKK).

This sequence belongs to the CTL (choline transporter-like) family. Post-translationally, N-glycosylated; N-glycosylation of Asn-677 and Asn-390 is required for a proper thiamine pyrophosphate uptake.

Its subcellular location is the membrane. It is found in the apical cell membrane. It catalyses the reaction choline(out) + n H(+)(in) = choline(in) + n H(+)(out). It carries out the reaction thiamine diphosphate(out) = thiamine diphosphate(in). Functionally, choline transporter that plays a role in the choline-acetylcholine system and is required to the efferent innervation of hair cells in the olivocochlear bundle for the maintenance of physiological function of outer hair cells and the protection of hair cells from acoustic injury. Also described as a thiamine pyrophosphate transporter in colon, may mediate the absorption of microbiota-generated thiamine pyrophosphate and contribute to host thiamine (vitamin B1) homeostasis. The protein is Choline transporter-like protein 4 of Sus scrofa (Pig).